The primary structure comprises 110 residues: Small ubiquitin-related modifier 3 (110 aa).

Glycyl lysine isopeptide (Lys-Gly) (interchain with G-Cter in SUMO2) cross-links involve residues Lys-5 and Lys-7. A Glycyl lysine isopeptide (Lys-Gly) (interchain with G-Cter in SUMO); alternate cross-link involves residue Lys-11. Lys-11 is covalently cross-linked (Glycyl lysine isopeptide (Lys-Gly) (interchain with G-Cter in SUMO2); alternate). A Ubiquitin-like domain is found at 15–92; that stretch reads DHINLKVAGQ…IDVFQQQTGG (78 aa). Residues 88–101 are compositionally biased toward polar residues; that stretch reads QQTGGSASRGSVPT. Positions 88 to 110 are disordered; that stretch reads QQTGGSASRGSVPTPNRCPDLCY. A Glycyl lysine isopeptide (Gly-Lys) (interchain with K-? in acceptor proteins) cross-link involves residue Gly-92. Positions 93–110 are excised as a propeptide; the sequence is SASRGSVPTPNRCPDLCY.

This sequence belongs to the ubiquitin family. SUMO subfamily. Interacts with SAE2 and UBE2I. Covalently attached to a number of proteins. Interacts with USP25 (via ts SIM domain); the interaction sumoylates USP25 and inhibits its ubiquitin hydrolyzing activity. Interacts with BMAL1. In terms of processing, polymeric chains can be formed through Lys-11 cross-linking. Post-translationally, cleavage of precursor form by SENP1, SENP2 or SENP5 is necessary for function.

The protein localises to the cytoplasm. It is found in the nucleus. It localises to the PML body. Ubiquitin-like protein which can be covalently attached to target lysines either as a monomer or as a lysine-linked polymer. Does not seem to be involved in protein degradation and may function as an antagonist of ubiquitin in the degradation process. Plays a role in a number of cellular processes such as nuclear transport, DNA replication and repair, mitosis and signal transduction. Covalent attachment to its substrates requires prior activation by the E1 complex SAE1-SAE2 and linkage to the E2 enzyme UBE2I, and can be promoted by an E3 ligase such as PIAS1-4, RANBP2 or CBX4. Plays a role in the regulation of sumoylation status of SETX. This is Small ubiquitin-related modifier 3 from Mus musculus (Mouse).